The following is a 192-amino-acid chain: Orotate phosphoribosyltransferase (192 aa).

5-phospho-alpha-D-ribose 1-diphosphate is bound at residue 116-124 (EDIVTTGLS). Orotate-binding residues include Thr-120 and Arg-148.

This sequence belongs to the purine/pyrimidine phosphoribosyltransferase family. PyrE subfamily. In terms of assembly, homodimer. The cofactor is Mg(2+).

The enzyme catalyses orotidine 5'-phosphate + diphosphate = orotate + 5-phospho-alpha-D-ribose 1-diphosphate. It functions in the pathway pyrimidine metabolism; UMP biosynthesis via de novo pathway; UMP from orotate: step 1/2. Catalyzes the transfer of a ribosyl phosphate group from 5-phosphoribose 1-diphosphate to orotate, leading to the formation of orotidine monophosphate (OMP). The chain is Orotate phosphoribosyltransferase from Brucella abortus (strain S19).